A 271-amino-acid chain; its full sequence is DNA repair protein RecO (271 aa).

The span at 249-264 shows a compositional bias: basic and acidic residues; the sequence is VRVEDSVRQDGDRDST. Residues 249–271 form a disordered region; it reads VRVEDSVRQDGDRDSTTRTSSPA.

Belongs to the RecO family.

Its function is as follows. Involved in DNA repair and RecF pathway recombination. The protein is DNA repair protein RecO of Rhodococcus jostii (strain RHA1).